We begin with the raw amino-acid sequence, 445 residues long: N-succinylarginine dihydrolase (445 aa).

Substrate contacts are provided by residues 19-28 (AGLSYGNVAS), asparagine 110, and 137-138 (HR). The active site involves glutamate 174. Residue arginine 214 participates in substrate binding. Residue histidine 250 is part of the active site. 2 residues coordinate substrate: aspartate 252 and asparagine 363. Catalysis depends on cysteine 369, which acts as the Nucleophile.

It belongs to the succinylarginine dihydrolase family. In terms of assembly, homodimer.

It catalyses the reaction N(2)-succinyl-L-arginine + 2 H2O + 2 H(+) = N(2)-succinyl-L-ornithine + 2 NH4(+) + CO2. It functions in the pathway amino-acid degradation; L-arginine degradation via AST pathway; L-glutamate and succinate from L-arginine: step 2/5. In terms of biological role, catalyzes the hydrolysis of N(2)-succinylarginine into N(2)-succinylornithine, ammonia and CO(2). This Aeromonas hydrophila subsp. hydrophila (strain ATCC 7966 / DSM 30187 / BCRC 13018 / CCUG 14551 / JCM 1027 / KCTC 2358 / NCIMB 9240 / NCTC 8049) protein is N-succinylarginine dihydrolase.